The primary structure comprises 283 residues: 4-diphosphocytidyl-2-C-methyl-D-erythritol kinase (283 aa).

Residue lysine 10 is part of the active site. 99 to 109 lines the ATP pocket; sequence PMGGGLGGGSS. Residue aspartate 141 is part of the active site.

It belongs to the GHMP kinase family. IspE subfamily. As to quaternary structure, homodimer.

The catalysed reaction is 4-CDP-2-C-methyl-D-erythritol + ATP = 4-CDP-2-C-methyl-D-erythritol 2-phosphate + ADP + H(+). The protein operates within isoprenoid biosynthesis; isopentenyl diphosphate biosynthesis via DXP pathway; isopentenyl diphosphate from 1-deoxy-D-xylulose 5-phosphate: step 3/6. Its function is as follows. Catalyzes the phosphorylation of the position 2 hydroxy group of 4-diphosphocytidyl-2C-methyl-D-erythritol. The polypeptide is 4-diphosphocytidyl-2-C-methyl-D-erythritol kinase (Escherichia coli O9:H4 (strain HS)).